Reading from the N-terminus, the 463-residue chain is L-seryl-tRNA(Sec) selenium transferase (463 aa).

Lysine 295 bears the N6-(pyridoxal phosphate)lysine mark.

This sequence belongs to the SelA family. Homodecamer; pentamer of dimers. Binds only one seryl-tRNA(Sec) per dimer. The cofactor is pyridoxal 5'-phosphate.

The protein localises to the cytoplasm. It carries out the reaction L-seryl-tRNA(Sec) + selenophosphate + H(+) = L-selenocysteinyl-tRNA(Sec) + phosphate. The protein operates within aminoacyl-tRNA biosynthesis; selenocysteinyl-tRNA(Sec) biosynthesis; selenocysteinyl-tRNA(Sec) from L-seryl-tRNA(Sec) (bacterial route): step 1/1. In terms of biological role, converts seryl-tRNA(Sec) to selenocysteinyl-tRNA(Sec) required for selenoprotein biosynthesis. The protein is L-seryl-tRNA(Sec) selenium transferase of Salmonella enteritidis PT4 (strain P125109).